A 453-amino-acid chain; its full sequence is Serine--tRNA ligase (453 aa).

Residue 252–254 (TAE) coordinates L-serine. ATP contacts are provided by residues 283 to 285 (RKE) and valine 299. Position 306 (glutamate 306) interacts with L-serine. ATP is bound at residue 370–373 (EMVS). Threonine 405 contacts L-serine.

This sequence belongs to the class-II aminoacyl-tRNA synthetase family. Type-1 seryl-tRNA synthetase subfamily. As to quaternary structure, homodimer. The tRNA molecule binds across the dimer.

The protein localises to the cytoplasm. The catalysed reaction is tRNA(Ser) + L-serine + ATP = L-seryl-tRNA(Ser) + AMP + diphosphate + H(+). It catalyses the reaction tRNA(Sec) + L-serine + ATP = L-seryl-tRNA(Sec) + AMP + diphosphate + H(+). Its pathway is aminoacyl-tRNA biosynthesis; selenocysteinyl-tRNA(Sec) biosynthesis; L-seryl-tRNA(Sec) from L-serine and tRNA(Sec): step 1/1. In terms of biological role, catalyzes the attachment of serine to tRNA(Ser). Is also able to aminoacylate tRNA(Sec) with serine, to form the misacylated tRNA L-seryl-tRNA(Sec), which will be further converted into selenocysteinyl-tRNA(Sec). This chain is Serine--tRNA ligase, found in Sulfurisphaera tokodaii (strain DSM 16993 / JCM 10545 / NBRC 100140 / 7) (Sulfolobus tokodaii).